We begin with the raw amino-acid sequence, 74 residues long: EMBRYO SURROUNDING FACTOR 1-like protein 4 (74 aa).

A signal peptide spans 1–22 (MKSSHAYLVCILLLSLFSLHQC). Intrachain disulfides connect Cys-36–Cys-51, Cys-41–Cys-70, Cys-49–Cys-66, and Cys-52–Cys-59.

This sequence belongs to the MEG family. Expressed in flowers.

The polypeptide is EMBRYO SURROUNDING FACTOR 1-like protein 4 (ESFL4) (Arabidopsis thaliana (Mouse-ear cress)).